The chain runs to 399 residues: Unsaturated chondroitin disaccharide hydrolase (399 aa).

Catalysis depends on Asp-116, which acts as the Nucleophile. Substrate-binding residues include Asp-116, Asp-176, Gly-234, Thr-236, Arg-248, Trp-252, Ser-366, and Ser-369. The Proton donor role is filled by Asp-176.

It belongs to the glycosyl hydrolase 88 family. As to quaternary structure, monomer.

It catalyses the reaction beta-D-4-deoxy-Delta(4)-GlcpA-(1-&gt;3)-beta-D-GalpNAc6S + H2O = N-acetyl-beta-D-galactosamine 6-sulfate + 5-dehydro-4-deoxy-D-glucuronate. Catalyzes the hydrolysis of unsaturated hyaluronate and chondroitin disaccharides. Also degrades unsaturated heparin disaccharides. Releases 4-deoxy-4,5-didehydro D-glucuronic acid or 4-deoxy-4,5-didehydro L-iduronic acid from chondroitin disaccharides, hyaluronan disaccharides and heparin disaccharides and cleaves both glycosidic (1-&gt;3) and (1-&gt;4) bonds. Prefers sulfated glycosaminoglycans compared to unsulfated glycosaminoglycans. Probably required for mammalian cells invasion through the degradation of extracellular sulfated glycosaminoglycans such as chondroitin and hyaluronan. This is Unsaturated chondroitin disaccharide hydrolase (ugl) from Streptococcus pyogenes serotype M1.